The following is a 780-amino-acid chain: 5-methyltetrahydropteroyltriglutamate--homocysteine methyltransferase (780 aa).

5-methyltetrahydropteroyltri-L-glutamate-binding positions include 15-18 (RELK) and Lys-114. L-homocysteine-binding positions include 457–459 (IGS) and Glu-510. L-methionine is bound by residues 457–459 (IGS) and Glu-510. Residues 541–542 (RC) and Trp-587 contribute to the 5-methyltetrahydropteroyltri-L-glutamate site. Asp-625 serves as a coordination point for L-homocysteine. Asp-625 contacts L-methionine. Glu-631 is a binding site for 5-methyltetrahydropteroyltri-L-glutamate. Residues His-667, Cys-669, and Glu-691 each coordinate Zn(2+). The active-site Proton donor is His-720. Cys-752 provides a ligand contact to Zn(2+).

It belongs to the vitamin-B12 independent methionine synthase family. Zn(2+) serves as cofactor.

The enzyme catalyses 5-methyltetrahydropteroyltri-L-glutamate + L-homocysteine = tetrahydropteroyltri-L-glutamate + L-methionine. The protein operates within amino-acid biosynthesis; L-methionine biosynthesis via de novo pathway; L-methionine from L-homocysteine (MetE route): step 1/1. Its function is as follows. Catalyzes the transfer of a methyl group from 5-methyltetrahydrofolate to homocysteine resulting in methionine formation. This Nitratidesulfovibrio vulgaris (strain DSM 19637 / Miyazaki F) (Desulfovibrio vulgaris) protein is 5-methyltetrahydropteroyltriglutamate--homocysteine methyltransferase.